Reading from the N-terminus, the 424-residue chain is Histidine--tRNA ligase (424 aa).

This sequence belongs to the class-II aminoacyl-tRNA synthetase family. In terms of assembly, homodimer.

It is found in the cytoplasm. It catalyses the reaction tRNA(His) + L-histidine + ATP = L-histidyl-tRNA(His) + AMP + diphosphate + H(+). This is Histidine--tRNA ligase from Salmonella gallinarum (strain 287/91 / NCTC 13346).